A 137-amino-acid chain; its full sequence is Proofreading thioesterase EntH (137 aa).

Catalysis depends on Glu63, which acts as the Nucleophile or proton acceptor.

This sequence belongs to the thioesterase PaaI family. In terms of assembly, homotetramer. Dimer of dimers. Interacts specifically with the aryl carrier protein (ArCP) domain of EntB.

It is found in the cytoplasm. The protein operates within siderophore biosynthesis; enterobactin biosynthesis. In terms of biological role, required for optimal enterobactin synthesis. Acts as a proofreading enzyme that prevents EntB misacylation by hydrolyzing the thioester bound existing between EntB and wrongly charged molecules. The chain is Proofreading thioesterase EntH from Salmonella paratyphi B (strain ATCC BAA-1250 / SPB7).